The chain runs to 332 residues: tRNA dimethylallyltransferase (332 aa).

Residue 30 to 37 (GPTAVGKT) participates in ATP binding. Residue 32–37 (TAVGKT) coordinates substrate. The interaction with substrate tRNA stretch occupies residues 57 to 60 (DSMQ).

Belongs to the IPP transferase family. Monomer. Requires Mg(2+) as cofactor.

It carries out the reaction adenosine(37) in tRNA + dimethylallyl diphosphate = N(6)-dimethylallyladenosine(37) in tRNA + diphosphate. Its function is as follows. Catalyzes the transfer of a dimethylallyl group onto the adenine at position 37 in tRNAs that read codons beginning with uridine, leading to the formation of N6-(dimethylallyl)adenosine (i(6)A). The sequence is that of tRNA dimethylallyltransferase from Natranaerobius thermophilus (strain ATCC BAA-1301 / DSM 18059 / JW/NM-WN-LF).